The sequence spans 432 residues: Cyclic di-GMP phosphodiesterase CdgJ (432 aa).

Residues 1-232 form the EAL domain; the sequence is MVRCLWAAEC…QRYVSPEHVI (232 aa). The region spanning 226-413 is the HDOD domain; it reads VSPEHVIAMQ…CLELGFDLED (188 aa).

The catalysed reaction is 3',3'-c-di-GMP + H2O = 5'-phosphoguanylyl(3'-&gt;5')guanosine + H(+). Its function is as follows. Phosphodiesterase (PDE) that catalyzes the hydrolysis of cyclic diguanylate (c-di-GMP). Positively regulates motility and negatively regulates biofilm formation. The polypeptide is Cyclic di-GMP phosphodiesterase CdgJ (Vibrio cholerae serotype O1 (strain ATCC 39315 / El Tor Inaba N16961)).